A 142-amino-acid polypeptide reads, in one-letter code: MEPFVITASECDCNSAHSSRVSKDGYALSDELSNETMFLTQVKYIFEGEEDHIDDNTMQEINTDIVNVVIVELDETLEIKNVELISDEYQLLGFSNDADNDLNLTILSEFPADVSPGTRDLGKLVTRYQHQNKHLKHMLQEL.

It localises to the cytoplasm. It is found in the cytoskeleton. The protein localises to the preautophagosomal structure. In terms of biological role, plays a role in starvation-induced autophagy. Involved in mitophagy. Functions with ATG17 and ATG29 at the preautophagosomal structure (PAS) in order to form normal autophagosomes under starvation conditions. May be involved in microtubule function, such as chromosome segregation and karyogamy. This chain is Autophagy-related protein 31 (CIS1), found in Eremothecium gossypii (strain ATCC 10895 / CBS 109.51 / FGSC 9923 / NRRL Y-1056) (Yeast).